A 663-amino-acid polypeptide reads, in one-letter code: Syntabulin (663 aa).

2 disordered regions span residues 1–202 (MGPL…PREK) and 216–267 (VNIH…PEQY). The sufficient for interaction with KIF5B stretch occupies residues 2–417 (GPLRESKKEH…DTMADGLSLE (416 aa)). S50 carries the phosphoserine modification. The segment covering 57-73 (FNPSSSGRSARTVSSNS) has biased composition (low complexity). The span at 81-97 (CPSSQSVSPVKTPSDAG) shows a compositional bias: polar residues. S107 is subject to Phosphoserine. Low complexity-rich tracts occupy residues 145–158 (EADF…GSIS), 188–198 (SSHKPGSSPSS), and 221–241 (SYAP…SDCS). Positions 271–353 (LQQKEVTVRH…MRSSLADKDK (83 aa)) form a coiled coil. Residues 310-417 (REDWIEEECH…DTMADGLSLE (108 aa)) are sufficient for interaction with STX1A. 2 positions are modified to phosphoserine: S396 and S555. A helical transmembrane segment spans residues 606–626 (SFLVDLLAVAAPVVPTVLWAF).

Interacts with STX1A and KIF5B. As to expression, isoform 3, isoform 4 and isoform 5 are expressed in HeLa cell line (at protein level). Isoform 3 is expressed in fetal and adult brain. Isoform 4 is expressed in numerous fetal tissues (brain, kidney, liver, lung, and thymus) and in adult brain, kidney, liver, lung, pancreas, colon, prostate, small intestine, testis and thymus. Isoform 5 is expressed in fetal brain, brain and small intestine.

It localises to the cytoplasm. Its subcellular location is the cytoskeleton. The protein resides in the cytoplasmic vesicle. The protein localises to the golgi apparatus membrane. Part of a kinesin motor-adapter complex that is critical for the anterograde axonal transport of active zone components and contributes to activity-dependent presynaptic assembly during neuronal development. The protein is Syntabulin (SYBU) of Homo sapiens (Human).